We begin with the raw amino-acid sequence, 95 residues long: DNA-directed RNA polymerase subunit Rpo11 (95 aa).

This sequence belongs to the archaeal Rpo11/eukaryotic RPB11/RPC19 RNA polymerase subunit family. As to quaternary structure, part of the RNA polymerase complex.

It is found in the cytoplasm. It catalyses the reaction RNA(n) + a ribonucleoside 5'-triphosphate = RNA(n+1) + diphosphate. Its function is as follows. DNA-dependent RNA polymerase (RNAP) catalyzes the transcription of DNA into RNA using the four ribonucleoside triphosphates as substrates. This Thermococcus sibiricus (strain DSM 12597 / MM 739) protein is DNA-directed RNA polymerase subunit Rpo11.